Reading from the N-terminus, the 608-residue chain is 65-kDa microtubule-associated protein 6 (608 aa).

Coiled coils occupy residues aspartate 164–aspartate 186, glutamate 368–lysine 388, and valine 467–glutamine 503. Residues leucine 501–asparagine 565 form a disordered region. The span at serine 510–proline 523 shows a compositional bias: low complexity. At serine 513 the chain carries Phosphoserine. Polar residues predominate over residues phenylalanine 526–valine 535. At serine 604 the chain carries Phosphoserine.

The protein belongs to the MAP65/ASE1 family. As to quaternary structure, forms a dimer. Binds to polymerized centrally located endocytic MT.

The protein localises to the nucleus. Its subcellular location is the cytoplasm. It is found in the mitochondrion. It localises to the cytoskeleton. The protein resides in the phragmoplast. Its function is as follows. Microtubule-associated protein that mediates the formation of a mesh-like stable and dense network formed by individual microtubules (MT). Confers MT resistance to high concentration of NaCl. The protein is 65-kDa microtubule-associated protein 6 (MAP65-6) of Arabidopsis thaliana (Mouse-ear cress).